Consider the following 122-residue polypeptide: Large ribosomal subunit protein bL12 (122 aa).

The tract at residues 96-122 (APKSLKTGLSKDEANEMKKKLEDAGAT) is disordered. Residues 104-122 (LSKDEANEMKKKLEDAGAT) are compositionally biased toward basic and acidic residues.

The protein belongs to the bacterial ribosomal protein bL12 family. As to quaternary structure, homodimer. Part of the ribosomal stalk of the 50S ribosomal subunit. Forms a multimeric L10(L12)X complex, where L10 forms an elongated spine to which 2 to 4 L12 dimers bind in a sequential fashion. Binds GTP-bound translation factors.

Its function is as follows. Forms part of the ribosomal stalk which helps the ribosome interact with GTP-bound translation factors. Is thus essential for accurate translation. This is Large ribosomal subunit protein bL12 from Liberibacter asiaticus (Citrus greening disease).